A 514-amino-acid chain; its full sequence is MSHNAPLVLMILDGWGYNENDRYNAIAKANTPQWDEWWQTCPHILLKASGLPVGLPDEQMGNSEVGHMHIGAGRVIQQDFTRINEAINNGKFAKNAVFHEVIDQLKKTEKSLHIMGLLSPGGVHSHEQHLFALLALCNQKKFRSVHLHLFLDGRDTPPQSALDSLKCLNEELAKHPVATINSICGRYYAMDRDKRWERVEPVYNLLTQGKSERQFPDAETAIHFYYKNKISDEFVPPTLIGKEHSIQDGDAVLFFNFRADRARQLTSTFLDPSFKGFERKTLPKLSYFVSMTQYDKNLLTTTAFPPVPLNNTLGEVLSSHGLSQLRIAETEKYAHVTFFFNGGCESVFTNEERIMVPSPQVATYDLQPEMSAHELTKTLIAAINSQDYHVIICNYANADMVGHTGNFEATVQAIECLDQCMQQVWQALKNNGGKLLITADHGNAEEMFSEATNQAHTAHTSEPVPFLYVGGGWHFTHSEGSLIDIAPSLLALLGITPPPEMTGRILLEKNHAHP.

Residues D13 and S63 each contribute to the Mn(2+) site. The Phosphoserine intermediate role is filled by S63. Substrate is bound by residues H124, 154-155, R186, R192, 258-261, and K332; these read RD and RADR. Residues D399, H403, D440, H441, and H459 each contribute to the Mn(2+) site.

The protein belongs to the BPG-independent phosphoglycerate mutase family. Monomer. Mn(2+) serves as cofactor.

The enzyme catalyses (2R)-2-phosphoglycerate = (2R)-3-phosphoglycerate. It functions in the pathway carbohydrate degradation; glycolysis; pyruvate from D-glyceraldehyde 3-phosphate: step 3/5. Its function is as follows. Catalyzes the interconversion of 2-phosphoglycerate and 3-phosphoglycerate. This chain is 2,3-bisphosphoglycerate-independent phosphoglycerate mutase, found in Legionella pneumophila subsp. pneumophila (strain Philadelphia 1 / ATCC 33152 / DSM 7513).